Here is a 469-residue protein sequence, read N- to C-terminus: Cysteine--tRNA ligase (469 aa).

Residue cysteine 33 participates in Zn(2+) binding. The 'HIGH' region signature appears at 35-45 (ATVQGLPHIGH). Residues cysteine 211, histidine 236, and glutamate 240 each coordinate Zn(2+). Positions 267 to 271 (KMSKS) match the 'KMSKS' region motif. Lysine 270 contributes to the ATP binding site.

Belongs to the class-I aminoacyl-tRNA synthetase family. Monomer. Zn(2+) serves as cofactor.

The protein localises to the cytoplasm. It carries out the reaction tRNA(Cys) + L-cysteine + ATP = L-cysteinyl-tRNA(Cys) + AMP + diphosphate. The chain is Cysteine--tRNA ligase (cysS) from Mycobacterium tuberculosis (strain CDC 1551 / Oshkosh).